A 350-amino-acid polypeptide reads, in one-letter code: Probable poly-beta-1,6-N-acetyl-D-glucosamine export protein (350 aa).

The next 10 helical transmembrane spans lie at 8–28, 40–60, 83–103, 119–139, 146–166, 182–202, 216–236, 254–274, 276–296, and 308–328; these read LVYL…LTQI, LVLQ…FIIL, YILI…SLLT, QWYG…YIIF, FNSK…LYYF, LSEN…AYMG, LVIM…LANG, IMFI…FNTI, MISA…DSLF, and VFLA…GMIL.

It belongs to the acyltransferase 3 family.

It is found in the cell membrane. Presumably involved in the export of the biofilm adhesin polysaccharide poly-beta-1,6-N-acetyl-D-glucosamine (PNAG, also referred to as PIA) across the cell membrane. The polypeptide is Probable poly-beta-1,6-N-acetyl-D-glucosamine export protein (icaC) (Staphylococcus aureus (strain NCTC 8325 / PS 47)).